A 341-amino-acid polypeptide reads, in one-letter code: Glyceraldehyde-3-phosphate dehydrogenase 2 (341 aa).

NAD(+) contacts are provided by residues 13–14 (RI), Asp35, and Arg85. D-glyceraldehyde 3-phosphate contacts are provided by residues 157–159 (SCT), Thr188, 217–218 (TG), and Arg240. Cys158 (nucleophile) is an active-site residue. Asn322 contributes to the NAD(+) binding site.

The protein belongs to the glyceraldehyde-3-phosphate dehydrogenase family. In terms of assembly, homotetramer.

The protein localises to the cytoplasm. The enzyme catalyses D-glyceraldehyde 3-phosphate + phosphate + NAD(+) = (2R)-3-phospho-glyceroyl phosphate + NADH + H(+). Its pathway is carbohydrate degradation; glycolysis; pyruvate from D-glyceraldehyde 3-phosphate: step 1/5. This is Glyceraldehyde-3-phosphate dehydrogenase 2 (gpd-2) from Caenorhabditis elegans.